The following is a 172-amino-acid chain: MADQDQNTQQTGSEAPAFNLQRVYLKDLSVEMPNAPHIFLEQEGPAVEVTINVGGQRLAETVFESTVTVTVTTRVNDKVLYLVEGTQAGIFELANIPPEQMDPILGIVCPTMLYPYLRANVADAITRTSLPALHLTEVNFQALYEQRLAEMAQQQEQSADSGIILPPSATRQ.

This sequence belongs to the SecB family. Homotetramer, a dimer of dimers. One homotetramer interacts with 1 SecA dimer.

The protein resides in the cytoplasm. Functionally, one of the proteins required for the normal export of preproteins out of the cell cytoplasm. It is a molecular chaperone that binds to a subset of precursor proteins, maintaining them in a translocation-competent state. It also specifically binds to its receptor SecA. This chain is Protein-export protein SecB, found in Bordetella avium (strain 197N).